A 661-amino-acid polypeptide reads, in one-letter code: Heme transporter BhuA (661 aa).

The first 23 residues, Met-1 to Ala-23, serve as a signal peptide directing secretion. In terms of domain architecture, TBDR plug spans Lys-48–Val-159. One can recognise a TBDR beta-barrel domain in the interval Thr-170–Phe-661.

It belongs to the TonB-dependent receptor family.

Its subcellular location is the cell outer membrane. Its function is as follows. Heme transporter. The protein is Heme transporter BhuA (bhuA) of Brucella abortus biovar 1 (strain 9-941).